We begin with the raw amino-acid sequence, 356 residues long: Inactive ubiquitin thioesterase OTULINL (356 aa).

A disordered region spans residues 1 to 22 (MAATRSPTRARERERSGAPAAG). Residues 1 to 83 (MAATRSPTRA…KWWIGYLQRK (83 aa)) form a required for membrane binding region. In terms of domain architecture, OTU spans 128–356 (KCVRQVRRDN…NDRHYHIPVF (229 aa)).

The protein belongs to the peptidase C65 family. Otulin subfamily. In terms of assembly, does not bind ubiquitin or ubiquitin-like proteins.

It localises to the cytoplasm. Its subcellular location is the endoplasmic reticulum membrane. It is found in the nucleus envelope. Lacks deubiquitinase activity. The sequence is that of Inactive ubiquitin thioesterase OTULINL from Homo sapiens (Human).